The sequence spans 172 residues: Adenine phosphoribosyltransferase (172 aa).

The protein belongs to the purine/pyrimidine phosphoribosyltransferase family. Homodimer.

The protein localises to the cytoplasm. The enzyme catalyses AMP + diphosphate = 5-phospho-alpha-D-ribose 1-diphosphate + adenine. It functions in the pathway purine metabolism; AMP biosynthesis via salvage pathway; AMP from adenine: step 1/1. Its function is as follows. Catalyzes a salvage reaction resulting in the formation of AMP, that is energically less costly than de novo synthesis. This is Adenine phosphoribosyltransferase from Exiguobacterium sp. (strain ATCC BAA-1283 / AT1b).